The sequence spans 636 residues: Fructose-1,6-bisphosphatase class 3 (636 aa).

Belongs to the FBPase class 3 family. Mn(2+) serves as cofactor.

The enzyme catalyses beta-D-fructose 1,6-bisphosphate + H2O = beta-D-fructose 6-phosphate + phosphate. The protein operates within carbohydrate biosynthesis; gluconeogenesis. In Streptococcus gordonii (strain Challis / ATCC 35105 / BCRC 15272 / CH1 / DL1 / V288), this protein is Fructose-1,6-bisphosphatase class 3.